Reading from the N-terminus, the 351-residue chain is Dihydroorotate dehydrogenase (quinone) (351 aa).

FMN is bound by residues 67 to 71 and Thr-91; that span reads AGFDK. Residue Lys-71 participates in substrate binding. 116–120 serves as a coordination point for substrate; that stretch reads NAMGF. FMN is bound by residues Asn-145 and Asn-178. Asn-178 is a substrate binding site. Ser-181 acts as the Nucleophile in catalysis. Residue Asn-183 coordinates substrate. FMN is bound by residues Lys-214 and Thr-242. 243 to 244 serves as a coordination point for substrate; it reads NT. FMN contacts are provided by residues Gly-262, Gly-291, and 312–313; that span reads YS.

Belongs to the dihydroorotate dehydrogenase family. Type 2 subfamily. Monomer. The cofactor is FMN.

It is found in the cell membrane. The enzyme catalyses (S)-dihydroorotate + a quinone = orotate + a quinol. It functions in the pathway pyrimidine metabolism; UMP biosynthesis via de novo pathway; orotate from (S)-dihydroorotate (quinone route): step 1/1. Its function is as follows. Catalyzes the conversion of dihydroorotate to orotate with quinone as electron acceptor. This chain is Dihydroorotate dehydrogenase (quinone), found in Helicobacter pylori (strain HPAG1).